A 261-amino-acid chain; its full sequence is 5'-nucleotidase SurE (261 aa).

A divalent metal cation contacts are provided by aspartate 8, aspartate 9, serine 39, and asparagine 94.

This sequence belongs to the SurE nucleotidase family. A divalent metal cation is required as a cofactor.

It localises to the cytoplasm. It carries out the reaction a ribonucleoside 5'-phosphate + H2O = a ribonucleoside + phosphate. In terms of biological role, nucleotidase that shows phosphatase activity on nucleoside 5'-monophosphates. This Archaeoglobus fulgidus (strain ATCC 49558 / DSM 4304 / JCM 9628 / NBRC 100126 / VC-16) protein is 5'-nucleotidase SurE.